The sequence spans 280 residues: Acetyl-coenzyme A carboxylase carboxyl transferase subunit beta (280 aa).

A CoA carboxyltransferase N-terminal domain is found at 26-280; the sequence is LWQKCPRCGE…TKLLAWHSQK (255 aa). 4 residues coordinate Zn(2+): Cys-30, Cys-33, Cys-49, and Cys-52. The C4-type zinc finger occupies 30–52; it reads CPRCGEIIFNKELEKNFKVCPKC.

Belongs to the AccD/PCCB family. As to quaternary structure, acetyl-CoA carboxylase is a heterohexamer composed of biotin carboxyl carrier protein (AccB), biotin carboxylase (AccC) and two subunits each of ACCase subunit alpha (AccA) and ACCase subunit beta (AccD). Requires Zn(2+) as cofactor.

Its subcellular location is the cytoplasm. The enzyme catalyses N(6)-carboxybiotinyl-L-lysyl-[protein] + acetyl-CoA = N(6)-biotinyl-L-lysyl-[protein] + malonyl-CoA. It participates in lipid metabolism; malonyl-CoA biosynthesis; malonyl-CoA from acetyl-CoA: step 1/1. In terms of biological role, component of the acetyl coenzyme A carboxylase (ACC) complex. Biotin carboxylase (BC) catalyzes the carboxylation of biotin on its carrier protein (BCCP) and then the CO(2) group is transferred by the transcarboxylase to acetyl-CoA to form malonyl-CoA. In Carboxydothermus hydrogenoformans (strain ATCC BAA-161 / DSM 6008 / Z-2901), this protein is Acetyl-coenzyme A carboxylase carboxyl transferase subunit beta.